Reading from the N-terminus, the 830-residue chain is Periplasmic nitrate reductase (830 aa).

The tat-type signal signal peptide spans 1 to 32 (MELNRRDFMKANAAVAAAAAAGITIPVKNVHA). The region spanning 39–95 (IRWDKAPCRYCGTGCSVLVGTKDGRVVATQGDPDAEVNRGLNCIKGYFLSKIMYGAD) is the 4Fe-4S Mo/W bis-MGD-type domain. [4Fe-4S] cluster is bound by residues Cys46, Cys49, Cys53, and Cys81. Mo-bis(molybdopterin guanine dinucleotide) contacts are provided by residues Lys83, Gln151, Asn176, Cys180, 213-220 (WGSNMAEM), 244-248 (STFEH), Met374, Gln378, Asn484, 510-511 (SD), Lys533, Asp560, and 720-729 (TGRVLEHWHT). Phe796 contacts substrate. 2 residues coordinate Mo-bis(molybdopterin guanine dinucleotide): Asn804 and Lys821.

The protein belongs to the prokaryotic molybdopterin-containing oxidoreductase family. NasA/NapA/NarB subfamily. Component of the periplasmic nitrate reductase NapAB complex composed of NapA and NapB. [4Fe-4S] cluster is required as a cofactor. The cofactor is Mo-bis(molybdopterin guanine dinucleotide). Predicted to be exported by the Tat system. The position of the signal peptide cleavage has not been experimentally proven.

The protein localises to the periplasm. The enzyme catalyses 2 Fe(II)-[cytochrome] + nitrate + 2 H(+) = 2 Fe(III)-[cytochrome] + nitrite + H2O. Catalytic subunit of the periplasmic nitrate reductase complex NapAB. Receives electrons from NapB and catalyzes the reduction of nitrate to nitrite. This is Periplasmic nitrate reductase from Mannheimia succiniciproducens (strain KCTC 0769BP / MBEL55E).